We begin with the raw amino-acid sequence, 265 residues long: Protein ENDO16 (265 aa).

Residues 25 to 27 carry the Cell attachment site motif; it reads RGD. Residues 71–265 are disordered; that stretch reads SPNAPSSQME…KEEEEEERSG (195 aa). A compositionally biased stretch (polar residues) spans 73-92; sequence NAPSSQMESEGSANPSTIGS. Tandem repeats lie at residues 75–94, 105–124, 128–147, and 148–167. The 6 X approximate repeats stretch occupies residues 75-257; the sequence is PSSQMESEGS…QSESEDPEKE (183 aa). Composition is skewed to acidic residues over residues 112 to 125, 133 to 144, 152 to 169, 194 to 212, 222 to 243, and 250 to 265; these read EGSE…TEGA, ESEGGDQEESEG, MESE…DSGE, EVDE…EEPG, ESEG…EVIE, and ESED…ERSG. Tandem repeats lie at residues 217–236 and 238–257. Asn228 carries an N-linked (GlcNAc...) asparagine glycan.

As to expression, first expressed in the vegetal plate and progressively the expression becomes restricted to a subset of endodermal cells as development proceeds.

Its function is as follows. May be an adhesion molecule involved in gastrulation of the sea urchin embryo. The chain is Protein ENDO16 (ENDO16) from Strongylocentrotus purpuratus (Purple sea urchin).